Here is a 229-residue protein sequence, read N- to C-terminus: Flagellar L-ring protein (229 aa).

The N-terminal stretch at 1-25 (MKQVRLLPPAPVRAVCALAVAALAG) is a signal peptide. C26 is lipidated: N-palmitoyl cysteine. The S-diacylglycerol cysteine moiety is linked to residue C26.

This sequence belongs to the FlgH family. As to quaternary structure, the basal body constitutes a major portion of the flagellar organelle and consists of four rings (L,P,S, and M) mounted on a central rod.

Its subcellular location is the cell outer membrane. It is found in the bacterial flagellum basal body. Its function is as follows. Assembles around the rod to form the L-ring and probably protects the motor/basal body from shearing forces during rotation. In Burkholderia ambifaria (strain ATCC BAA-244 / DSM 16087 / CCUG 44356 / LMG 19182 / AMMD) (Burkholderia cepacia (strain AMMD)), this protein is Flagellar L-ring protein.